Reading from the N-terminus, the 548-residue chain is T-complex protein 1 subunit theta (548 aa).

Residues Ala-528–Ala-548 form a disordered region.

It belongs to the TCP-1 chaperonin family. Heterooligomeric complex.

Its subcellular location is the cytoplasm. Molecular chaperone; assists the folding of proteins upon ATP hydrolysis. Known to play a role, in vitro, in the folding of actin and tubulin. Required for correct subcellular localization of pgl-1. The polypeptide is T-complex protein 1 subunit theta (Caenorhabditis briggsae).